A 144-amino-acid chain; its full sequence is Grifin (144 aa).

In terms of domain architecture, Galectin spans 5 to 133 (FEAFCAGGLA…DHQLAQVELA (129 aa)). Ser-138 is modified (phosphoserine).

Homodimer. Lens-specific. Located at the interface between lens fiber cells (at protein level).

The protein is Grifin (Grifin) of Rattus norvegicus (Rat).